Reading from the N-terminus, the 183-residue chain is Large ribosomal subunit protein uL6 (183 aa).

The protein belongs to the universal ribosomal protein uL6 family. In terms of assembly, part of the 50S ribosomal subunit.

This protein binds to the 23S rRNA, and is important in its secondary structure. It is located near the subunit interface in the base of the L7/L12 stalk, and near the tRNA binding site of the peptidyltransferase center. This chain is Large ribosomal subunit protein uL6, found in Chlamydia trachomatis serovar D (strain ATCC VR-885 / DSM 19411 / UW-3/Cx).